The sequence spans 141 residues: Large ribosomal subunit protein uL11c (141 aa).

The protein belongs to the universal ribosomal protein uL11 family. As to quaternary structure, part of the ribosomal stalk of the 50S ribosomal subunit. Interacts with L10 and the large rRNA to form the base of the stalk. L10 forms an elongated spine to which L12 dimers bind in a sequential fashion forming a multimeric L10(L12)X complex.

It is found in the plastid. Its subcellular location is the chloroplast. Forms part of the ribosomal stalk which helps the ribosome interact with GTP-bound translation factors. This is Large ribosomal subunit protein uL11c from Thalassiosira pseudonana (Marine diatom).